The chain runs to 208 residues: N-(5'-phosphoribosyl)anthranilate isomerase (208 aa).

The protein belongs to the TrpF family.

It carries out the reaction N-(5-phospho-beta-D-ribosyl)anthranilate = 1-(2-carboxyphenylamino)-1-deoxy-D-ribulose 5-phosphate. Its pathway is amino-acid biosynthesis; L-tryptophan biosynthesis; L-tryptophan from chorismate: step 3/5. The protein is N-(5'-phosphoribosyl)anthranilate isomerase of Nitrosospira multiformis (strain ATCC 25196 / NCIMB 11849 / C 71).